We begin with the raw amino-acid sequence, 121 residues long: Large ribosomal subunit protein uL22c (121 aa).

Belongs to the universal ribosomal protein uL22 family. In terms of assembly, part of the 50S ribosomal subunit.

It is found in the plastid. Its subcellular location is the chloroplast. Functionally, this protein binds specifically to 23S rRNA. The globular domain of the protein is located near the polypeptide exit tunnel on the outside of the subunit, while an extended beta-hairpin is found that lines the wall of the exit tunnel in the center of the 70S ribosome. In Guillardia theta (Cryptophyte), this protein is Large ribosomal subunit protein uL22c (rpl22).